The primary structure comprises 315 residues: Ribonuclease Z (315 aa).

Zn(2+) contacts are provided by histidine 61, histidine 63, aspartate 65, histidine 66, histidine 151, aspartate 219, and histidine 278. Aspartate 65 serves as the catalytic Proton acceptor.

This sequence belongs to the RNase Z family. In terms of assembly, homodimer. It depends on Zn(2+) as a cofactor.

It carries out the reaction Endonucleolytic cleavage of RNA, removing extra 3' nucleotides from tRNA precursor, generating 3' termini of tRNAs. A 3'-hydroxy group is left at the tRNA terminus and a 5'-phosphoryl group is left at the trailer molecule.. In terms of biological role, zinc phosphodiesterase, which displays some tRNA 3'-processing endonuclease activity. Probably involved in tRNA maturation, by removing a 3'-trailer from precursor tRNA. The protein is Ribonuclease Z of Clostridium botulinum (strain Alaska E43 / Type E3).